Here is a 429-residue protein sequence, read N- to C-terminus: Serine--tRNA ligase (429 aa).

236-238 (TAE) lines the L-serine pocket. An ATP-binding site is contributed by 267 to 269 (RSE). Residue E290 coordinates L-serine. 354–357 (EISS) contacts ATP. Position 390 (S390) interacts with L-serine.

The protein belongs to the class-II aminoacyl-tRNA synthetase family. Type-1 seryl-tRNA synthetase subfamily. As to quaternary structure, homodimer. The tRNA molecule binds across the dimer.

It is found in the cytoplasm. The enzyme catalyses tRNA(Ser) + L-serine + ATP = L-seryl-tRNA(Ser) + AMP + diphosphate + H(+). It catalyses the reaction tRNA(Sec) + L-serine + ATP = L-seryl-tRNA(Sec) + AMP + diphosphate + H(+). Its pathway is aminoacyl-tRNA biosynthesis; selenocysteinyl-tRNA(Sec) biosynthesis; L-seryl-tRNA(Sec) from L-serine and tRNA(Sec): step 1/1. Catalyzes the attachment of serine to tRNA(Ser). Is also able to aminoacylate tRNA(Sec) with serine, to form the misacylated tRNA L-seryl-tRNA(Sec), which will be further converted into selenocysteinyl-tRNA(Sec). This is Serine--tRNA ligase from Photorhabdus laumondii subsp. laumondii (strain DSM 15139 / CIP 105565 / TT01) (Photorhabdus luminescens subsp. laumondii).